We begin with the raw amino-acid sequence, 149 residues long: UPF0310 protein msl3206 (149 aa).

Belongs to the UPF0310 family.

The protein is UPF0310 protein msl3206 of Mesorhizobium japonicum (strain LMG 29417 / CECT 9101 / MAFF 303099) (Mesorhizobium loti (strain MAFF 303099)).